The primary structure comprises 130 residues: Small ribosomal subunit protein uS8 (130 aa).

This sequence belongs to the universal ribosomal protein uS8 family. As to quaternary structure, part of the 30S ribosomal subunit.

Its function is as follows. One of the primary rRNA binding proteins, it binds directly to 16S rRNA central domain where it helps coordinate assembly of the platform of the 30S subunit. The sequence is that of Small ribosomal subunit protein uS8 from Methanoculleus marisnigri (strain ATCC 35101 / DSM 1498 / JR1).